A 189-amino-acid polypeptide reads, in one-letter code: MSATVPEIRSENLLRYTVIGSRRPSVYFWAVALTGGGLGFTLAGLSSYFHRNLLPFSDPASLVFIPQGIAMLFYGVLGSLAGLYQWLSLYWNLGGGYNEFDRRTQKITLVRQGFPGKNREVRLEYDFAEVQSLRVELREGFNPRRAIYLRIKGRGDIPLTGVGQPPPLAEIENQAAEIARFLNVSLEGI.

2 helical membrane-spanning segments follow: residues 25–45 and 62–82; these read SVYFWAVALTGGGLGFTLAGL and LVFIPQGIAMLFYGVLGSLAG.

This sequence belongs to the Ycf4 family.

The protein resides in the cellular thylakoid membrane. Seems to be required for the assembly of the photosystem I complex. The polypeptide is Photosystem I assembly protein Ycf4 (Synechococcus sp. (strain JA-3-3Ab) (Cyanobacteria bacterium Yellowstone A-Prime)).